The following is a 308-amino-acid chain: Acetyl-coenzyme A carboxylase carboxyl transferase subunit beta (308 aa).

Residues 26-295 (LWIKDPETGE…EQKPLEPEIL (270 aa)) enclose the CoA carboxyltransferase N-terminal domain.

This sequence belongs to the AccD/PCCB family. As to quaternary structure, acetyl-CoA carboxylase is a heterohexamer composed of biotin carboxyl carrier protein (AccB), biotin carboxylase (AccC) and two subunits each of ACCase subunit alpha (AccA) and ACCase subunit beta (AccD).

It is found in the cytoplasm. It carries out the reaction N(6)-carboxybiotinyl-L-lysyl-[protein] + acetyl-CoA = N(6)-biotinyl-L-lysyl-[protein] + malonyl-CoA. The protein operates within lipid metabolism; malonyl-CoA biosynthesis; malonyl-CoA from acetyl-CoA: step 1/1. Functionally, component of the acetyl coenzyme A carboxylase (ACC) complex. Biotin carboxylase (BC) catalyzes the carboxylation of biotin on its carrier protein (BCCP) and then the CO(2) group is transferred by the transcarboxylase to acetyl-CoA to form malonyl-CoA. This Mesorhizobium japonicum (strain LMG 29417 / CECT 9101 / MAFF 303099) (Mesorhizobium loti (strain MAFF 303099)) protein is Acetyl-coenzyme A carboxylase carboxyl transferase subunit beta.